Here is a 97-residue protein sequence, read N- to C-terminus: Large ribosomal subunit protein bL28 (97 aa).

It belongs to the bacterial ribosomal protein bL28 family.

The sequence is that of Large ribosomal subunit protein bL28 from Rickettsia rickettsii (strain Iowa).